The primary structure comprises 336 residues: Succinylglutamate desuccinylase (336 aa).

Zn(2+)-binding residues include His59, Glu62, and His151. Residue Glu215 is part of the active site.

Belongs to the AspA/AstE family. Succinylglutamate desuccinylase subfamily. Zn(2+) is required as a cofactor.

The catalysed reaction is N-succinyl-L-glutamate + H2O = L-glutamate + succinate. Its pathway is amino-acid degradation; L-arginine degradation via AST pathway; L-glutamate and succinate from L-arginine: step 5/5. Its function is as follows. Transforms N(2)-succinylglutamate into succinate and glutamate. The chain is Succinylglutamate desuccinylase from Pseudomonas fluorescens (strain ATCC BAA-477 / NRRL B-23932 / Pf-5).